We begin with the raw amino-acid sequence, 94 residues long: CRISPR-associated endoribonuclease Cas2 (94 aa).

This sequence belongs to the CRISPR-associated endoribonuclease Cas2 protein family. E.coli-subtype subfamily. As to quaternary structure, homodimer. Part of the Cas1-Cas2 complex. Forms a hexamer with 2 Cas1 dimers sandwiching a Cas2 dimer. The DNA lies across a flat surface extending from 1 Cas1 dimer, across the Cas2 dimer and contacting the other Cas1 dimer. Only 1 Cas1 protein from each dimer is catalytic, the other interacts with the Cas2 dimer and possibly target DNA.

In terms of biological role, CRISPR (clustered regularly interspaced short palindromic repeat), is an adaptive immune system that provides protection against mobile genetic elements (viruses, transposable elements and conjugative plasmids). CRISPR clusters contain sequences complementary to antecedent mobile elements and target invading nucleic acids. CRISPR clusters are transcribed and processed into CRISPR RNA (crRNA). The Cas1-Cas2 complex is involved in CRISPR adaptation, the first stage of CRISPR immunity, being required for the addition/removal of CRISPR spacers at the leader end of the CRISPR locus. The Cas1-Cas2 complex introduces staggered nicks into both strands of the CRISPR array near the leader repeat and joins the 5'-ends of the repeat strands with the 3'-ends of the new spacer sequence. Spacer DNA integration requires supercoiled target DNA and 3'-OH ends on the inserted (spacer) DNA and probably initiates with a nucleophilic attack of the C 3'-OH end of the protospacer on the minus strand of the first repeat sequence. Expression of Cas1-Cas2 in a strain lacking both genes permits spacer acquisition. Cas2 not seen to bind DNA alone; the Cas1-Cas2 complex preferentially binds CRISPR-locus DNA. Highest binding is seen to a dual forked DNA complex with 3'-overhangs and a protospacer-adjacent motif-complement specifically positioned. The protospacer DNA lies across a flat surface extending from 1 Cas1 dimer, across the Cas2 dimer and contacting the other Cas1 dimer; the 23 bp-long ds section of the DNA is bracketed by 1 Tyr-22 from each of the Cas1 dimers. Cas1 cuts within the 3'-overhang, to generate a 33-nucleotide DNA that is probably incorporated into the CRISPR leader by a cut-and-paste mechanism. This subunit's probable nuclease activity is not required for spacer acquisition. This is CRISPR-associated endoribonuclease Cas2 (ygbF) from Escherichia coli (strain K12).